A 377-amino-acid chain; its full sequence is Protein ECM9 (377 aa).

In terms of biological role, may be involved in cell wall organization and biogenesis. This Saccharomyces cerevisiae (strain ATCC 204508 / S288c) (Baker's yeast) protein is Protein ECM9 (ECM9).